A 330-amino-acid polypeptide reads, in one-letter code: Glycerol-3-phosphate dehydrogenase [NAD(P)+] (330 aa).

NADPH is bound by residues Ser11, Phe12, Arg32, and Lys106. Positions 106, 133, and 135 each coordinate sn-glycerol 3-phosphate. Ala137 is a binding site for NADPH. Sn-glycerol 3-phosphate is bound by residues Lys188, Asp241, Ser251, Arg252, and Asn253. Catalysis depends on Lys188, which acts as the Proton acceptor. Arg252 provides a ligand contact to NADPH. Positions 276 and 278 each coordinate NADPH.

It belongs to the NAD-dependent glycerol-3-phosphate dehydrogenase family.

Its subcellular location is the cytoplasm. It carries out the reaction sn-glycerol 3-phosphate + NAD(+) = dihydroxyacetone phosphate + NADH + H(+). The catalysed reaction is sn-glycerol 3-phosphate + NADP(+) = dihydroxyacetone phosphate + NADPH + H(+). Its pathway is membrane lipid metabolism; glycerophospholipid metabolism. Its function is as follows. Catalyzes the reduction of the glycolytic intermediate dihydroxyacetone phosphate (DHAP) to sn-glycerol 3-phosphate (G3P), the key precursor for phospholipid synthesis. The protein is Glycerol-3-phosphate dehydrogenase [NAD(P)+] of Clostridium botulinum (strain Alaska E43 / Type E3).